The primary structure comprises 395 residues: Ketoisovalerate oxidoreductase subunit VorA (395 aa).

In terms of assembly, heterotetramer of one alpha, one beta, one delta and one gamma chain.

It catalyses the reaction 3-methyl-2-oxobutanoate + 2 oxidized [2Fe-2S]-[ferredoxin] + CoA = 2-methylpropanoyl-CoA + 2 reduced [2Fe-2S]-[ferredoxin] + CO2 + H(+). The sequence is that of Ketoisovalerate oxidoreductase subunit VorA (vorA) from Pyrococcus abyssi (strain GE5 / Orsay).